The following is a 715-amino-acid chain: Serrate RNA effector molecule homolog (715 aa).

3 disordered regions span residues 1-87, 223-259, and 629-715; these read MDSD…YSGP, ENKD…TDKA, and EPKH…DDIP. Basic and acidic residues-rich tracts occupy residues 7 to 25, 37 to 57, and 223 to 242; these read GDRR…DSYR, YDNK…SRGD, and ENKD…VKEE. The segment covering 243–256 has biased composition (acidic residues); the sequence is PNEEQEEGAIDDET. Over residues 629-659 the composition is skewed to basic and acidic residues; that stretch reads EPKHMPHMSRDDHRGGGGDRGYGRERDDDRG.

Belongs to the ARS2 family.

Its subcellular location is the nucleus. In terms of biological role, acts as a mediator between the cap-binding complex (CBC) and the primary microRNAs (miRNAs) processing machinery. Contributes to the stability and delivery of capped primary miRNA transcripts to the primary miRNA processing complex, thereby playing a role in RNA-mediated gene silencing (RNAi) by miRNAs. The polypeptide is Serrate RNA effector molecule homolog (Caenorhabditis briggsae).